Reading from the N-terminus, the 232-residue chain is Fibrillarin-like rRNA/tRNA 2'-O-methyltransferase (232 aa).

Residues 89–90, 108–109, 133–134, and 153–156 each bind S-adenosyl-L-methionine; these read TT, EF, DA, and DIAQ.

The protein belongs to the methyltransferase superfamily. Fibrillarin family. Interacts with nop5. Component of box C/D small ribonucleoprotein (sRNP) particles that contain rpl7ae, FlpA and nop5, plus a guide RNA.

Involved in pre-rRNA and tRNA processing. Utilizes the methyl donor S-adenosyl-L-methionine to catalyze the site-specific 2'-hydroxyl methylation of ribose moieties in rRNA and tRNA. Site specificity is provided by a guide RNA that base pairs with the substrate. Methylation occurs at a characteristic distance from the sequence involved in base pairing with the guide RNA. The sequence is that of Fibrillarin-like rRNA/tRNA 2'-O-methyltransferase from Saccharolobus islandicus (strain M.16.27) (Sulfolobus islandicus).